The following is a 233-amino-acid chain: MKLTTSVALLAAAGAQAHYTFPQTDINGQLSGEWVTIRETTNHYSHGPVTDVTSDQIRCYELNPGTPAPQIATVQAGGTVTFTVDPSIQHPGPLQFYMAKAPSGQTAATFQGTGNVWFKIYEDGPSGLGTSNITWPSSGKTEVSVKIPSCIAPGDYLLRVEHIALHSASTVGGAQFYLACAQLTVTGGTGTLNTGELVAFPGAYSATDPGILFQLYWPIPTSYTNPGPAPVSC.

The first 17 residues, 1 to 17, serve as a signal peptide directing secretion; that stretch reads MKLTTSVALLAAAGAQA. The Cu(2+) site is built by His18 and His90. Cystine bridges form between Cys59/Cys180 and Cys150/Cys233. A glycan (N-linked (GlcNAc...) asparagine) is linked at Asn132. His166 and Gln175 together coordinate O2. Cu(2+) is bound at residue Tyr177.

Belongs to the polysaccharide monooxygenase AA9 family. It depends on Cu(2+) as a cofactor.

The protein localises to the secreted. It carries out the reaction [(1-&gt;4)-beta-D-glucosyl]n+m + reduced acceptor + O2 = 4-dehydro-beta-D-glucosyl-[(1-&gt;4)-beta-D-glucosyl]n-1 + [(1-&gt;4)-beta-D-glucosyl]m + acceptor + H2O.. Its function is as follows. Lytic polysaccharide monooxygenase (LPMO) that depolymerizes crystalline and amorphous polysaccharides via the oxidation of scissile alpha- or beta-(1-4)-glycosidic bonds, yielding C1 and C4 oxidation products. Catalysis by LPMOs requires the reduction of the active-site copper from Cu(II) to Cu(I) by a reducing agent and H(2)O(2) or O(2) as a cosubstrate. Shows endoglucanase activity on tamarind xyloglucan, as well as on beechwood xylan when combined with phosphoric acid swollen cellulose (PASC). Shows no activity on wheat arabinoxylan, konjac glucomannan, acetylated spruce galactoglucomannan, or cellopentaose. The protein is AA9 family lytic polysaccharide monooxygenase A of Thermothielavioides terrestris (strain ATCC 38088 / NRRL 8126) (Thielavia terrestris).